A 61-amino-acid chain; its full sequence is Fasciculin-2 (61 aa).

Disulfide bonds link cysteine 3–cysteine 22, cysteine 17–cysteine 39, cysteine 41–cysteine 52, and cysteine 53–cysteine 59.

It belongs to the three-finger toxin family. Short-chain subfamily. Acn-esterase inhibitor sub-subfamily. As to expression, expressed by the venom gland.

Its subcellular location is the secreted. Functionally, interferes with neuromuscular transmission by inhibiting the enzyme acetylcholinesterase (AChE) present at the neuromuscular junction. It selectively binds and inhibits with a 1:1 stoichiometry the mammalian and electric fish AChE at picomolar concentrations. It is highly specific for the peripheral site of AChE and blocks the entry of acetylcholine into the active site of the enzyme (through the Met-33 residue), thereby preventing its breakdown. It has been called fasciculin since after injection into mice it causes severe, generalized and long-lasting (5-7 hours) fasciculations. The chain is Fasciculin-2 from Dendroaspis angusticeps (Eastern green mamba).